A 93-amino-acid polypeptide reads, in one-letter code: Alpha-defensin 24 (93 aa).

An N-terminal signal peptide occupies residues 1–19 (MKTLILLSALVLLAFQVQA). Positions 20–58 (DPIQNTDEETKTEEQPGEEDQAVSVSFGDPEGASLQEES) are excised as a propeptide. The interval 23–54 (QNTDEETKTEEQPGEEDQAVSVSFGDPEGASL) is disordered. 3 disulfides stabilise this stretch: cysteine 64–cysteine 92, cysteine 66–cysteine 81, and cysteine 71–cysteine 91.

The protein belongs to the alpha-defensin family.

The protein localises to the secreted. Its function is as follows. May have microbicidal activities. This chain is Alpha-defensin 24 (Defa24), found in Mus musculus (Mouse).